A 119-amino-acid chain; its full sequence is Protein TusC (119 aa).

Belongs to the DsrF/TusC family. In terms of assembly, heterohexamer, formed by a dimer of trimers. The hexameric TusBCD complex contains 2 copies each of TusB, TusC and TusD. The TusBCD complex interacts with TusE.

Its subcellular location is the cytoplasm. Its function is as follows. Part of a sulfur-relay system required for 2-thiolation of 5-methylaminomethyl-2-thiouridine (mnm(5)s(2)U) at tRNA wobble positions. This is Protein TusC from Buchnera aphidicola subsp. Acyrthosiphon pisum (strain APS) (Acyrthosiphon pisum symbiotic bacterium).